A 266-amino-acid chain; its full sequence is DLA class II histocompatibility antigen, DR-1 beta chain (266 aa).

The signal sequence occupies residues 1-29; sequence MVCLCFLGGSWMTALMLILMVLNPPFAWA. Residues 30–124 form a beta-1 region; the sequence is RDTPPHFLEV…IESFTVQRRV (95 aa). Over 30-227 the chain is Extracellular; sequence RDTPPHFLEV…RAQSDSAQSK (198 aa). 2 disulfide bridges follow: Cys-44/Cys-108 and Cys-146/Cys-202. An N-linked (GlcNAc...) asparagine glycan is attached at Asn-48. The interval 125 to 227 is beta-2; that stretch reads EPTVTVYPTK…RAQSDSAQSK (103 aa). In terms of domain architecture, Ig-like C1-type spans 126-214; that stretch reads PTVTVYPTKT…EHPSLTSPVT (89 aa). A helical membrane pass occupies residues 228 to 250; that stretch reads MLSGIGGFVLGLLFLAVGLFIYF. The Cytoplasmic segment spans residues 251-266; it reads RNQKGHSGLQPTGLLS.

The protein belongs to the MHC class II family.

It is found in the membrane. This is DLA class II histocompatibility antigen, DR-1 beta chain from Canis lupus familiaris (Dog).